Here is a 175-residue protein sequence, read N- to C-terminus: Ribosome maturation factor RimM (175 aa).

A PRC barrel domain is found at 96 to 175 (EDEFYWRELF…RIEVDWDPGF (80 aa)).

The protein belongs to the RimM family. As to quaternary structure, binds ribosomal protein uS19.

The protein resides in the cytoplasm. In terms of biological role, an accessory protein needed during the final step in the assembly of 30S ribosomal subunit, possibly for assembly of the head region. Essential for efficient processing of 16S rRNA. May be needed both before and after RbfA during the maturation of 16S rRNA. It has affinity for free ribosomal 30S subunits but not for 70S ribosomes. The polypeptide is Ribosome maturation factor RimM (Aliivibrio fischeri (strain ATCC 700601 / ES114) (Vibrio fischeri)).